The sequence spans 271 residues: Eukaryotic translation initiation factor 2 subunit beta (271 aa).

A C4-type zinc finger spans residues 223–247 (CLGCQSPDTILSKENRLFFLRCEKC).

This sequence belongs to the eIF-2-beta/eIF-5 family. In terms of assembly, eukaryotic translation initiation factor 2 eIF2 is a heterotrimeric complex composed of an alpha, a beta and a gamma subunit.

The protein localises to the cytoplasm. It is found in the cytosol. Component of the eIF2 complex that functions in the early steps of protein synthesis by forming a ternary complex with GTP and initiator tRNA. This complex binds to a 40S ribosomal subunit, followed by mRNA binding to form a 43S pre-initiation complex (43S PIC). Junction of the 60S ribosomal subunit to form the 80S initiation complex is preceded by hydrolysis of the GTP bound to eIF2 and release of an eIF2-GDP binary complex. In order for eIF2 to recycle and catalyze another round of initiation, the GDP bound to eIF2 must exchange with GTP by way of a reaction catalyzed by eIF2B. In Malus domestica (Apple), this protein is Eukaryotic translation initiation factor 2 subunit beta.